We begin with the raw amino-acid sequence, 306 residues long: 2-dehydro-3-deoxy-D-gluconate/2-dehydro-3-deoxy-phosphogluconate aldolase (306 aa).

Residues 61 to 62 (TT), 148 to 150 (YNY), and 173 to 175 (KDT) contribute to the substrate site. Catalysis depends on lysine 173, which acts as the Schiff-base intermediate with substrate.

It belongs to the DapA family. KDPG aldolase subfamily. In terms of assembly, homotetramer; dimer of dimers.

The catalysed reaction is 2-dehydro-3-deoxy-6-phospho-D-gluconate = D-glyceraldehyde 3-phosphate + pyruvate. The enzyme catalyses 2-dehydro-3-deoxy-D-gluconate = D-glyceraldehyde + pyruvate. It participates in carbohydrate acid metabolism; 2-dehydro-3-deoxy-D-gluconate degradation; D-glyceraldehyde 3-phosphate and pyruvate from 2-dehydro-3-deoxy-D-gluconate: step 2/2. In terms of biological role, involved in the degradation of glucose via the Entner-Doudoroff pathway. Catalyzes the reversible cleavage of 2-keto-3-deoxy-6-phosphogluconate (KDPG) and 2-keto-3-deoxygluconate (KDG) forming pyruvate and glyceraldehyde 3-phosphate or glyceraldehyde, respectively. It is not able to use 2-keto-3-deoxy-6-phosphogalactonate (KDPGal) and 2-keto-3-deoxygalactonate (KDGal) as substrate. This Thermoproteus tenax protein is 2-dehydro-3-deoxy-D-gluconate/2-dehydro-3-deoxy-phosphogluconate aldolase (kdgA).